A 222-amino-acid chain; its full sequence is Probable mitochondrial import inner membrane translocase subunit Tim17 3 (222 aa).

3 consecutive transmembrane segments (helical) span residues 16–36, 60–80, and 115–135; these read CGCA…LKGF, SIAG…CALV, and ALVG…VATI.

Belongs to the Tim17/Tim22/Tim23 family. As to quaternary structure, component of the TIM23 complex at least composed of Tim23, Tim17 (Tim17a1, Tim17a2 or Tim17b1) and a Tim50. The complex interacts with the Tim44 component of the PAM complex.

The protein localises to the mitochondrion inner membrane. Essential component of the TIM23 complex, a complex that mediates the translocation of transit peptide-containing proteins across the mitochondrial inner membrane. The protein is Probable mitochondrial import inner membrane translocase subunit Tim17 3 (Tim17a1) of Drosophila melanogaster (Fruit fly).